A 196-amino-acid chain; its full sequence is HTH-type transcriptional regulator UidR (196 aa).

Positions 10–70 (QPTRTRILNA…AIILQDQERA (61 aa)) constitute an HTH tetR-type domain. The H-T-H motif DNA-binding region spans 33–52 (SMKAICKSCAISPGTLYHHF).

Repressor for the uidRABC (gusRABC) operon. This Escherichia coli O157:H7 protein is HTH-type transcriptional regulator UidR (uidR).